A 227-amino-acid polypeptide reads, in one-letter code: Ribonuclease 3 (227 aa).

In terms of domain architecture, RNase III spans Ala-6–Asp-128. Glu-41 lines the Mg(2+) pocket. The active site involves Asp-45. Asp-114 and Glu-117 together coordinate Mg(2+). The active site involves Glu-117. In terms of domain architecture, DRBM spans Asp-155–Ser-225. Residues Gly-203–Glu-212 are compositionally biased toward basic and acidic residues. A disordered region spans residues Gly-203–Lys-227.

Belongs to the ribonuclease III family. As to quaternary structure, homodimer. Mg(2+) serves as cofactor.

It localises to the cytoplasm. The enzyme catalyses Endonucleolytic cleavage to 5'-phosphomonoester.. Digests double-stranded RNA. Involved in the processing of primary rRNA transcript to yield the immediate precursors to the large and small rRNAs (23S and 16S). Processes some mRNAs, and tRNAs when they are encoded in the rRNA operon. Processes pre-crRNA and tracrRNA of type II CRISPR loci if present in the organism. This is Ribonuclease 3 from Xylella fastidiosa (strain M23).